A 199-amino-acid chain; its full sequence is Protein GrpE (199 aa).

Residues 1-24 show a composition bias toward basic and acidic residues; that stretch reads MSKQNKKDWKKFKDEHKEEHKVEN. The tract at residues 1-52 is disordered; sequence MSKQNKKDWKKFKDEHKEEHKVENEILEEETDEESQHQEPALGHPSYTALEE.

Belongs to the GrpE family. As to quaternary structure, homodimer.

It is found in the cytoplasm. In terms of biological role, participates actively in the response to hyperosmotic and heat shock by preventing the aggregation of stress-denatured proteins, in association with DnaK and GrpE. It is the nucleotide exchange factor for DnaK and may function as a thermosensor. Unfolded proteins bind initially to DnaJ; upon interaction with the DnaJ-bound protein, DnaK hydrolyzes its bound ATP, resulting in the formation of a stable complex. GrpE releases ADP from DnaK; ATP binding to DnaK triggers the release of the substrate protein, thus completing the reaction cycle. Several rounds of ATP-dependent interactions between DnaJ, DnaK and GrpE are required for fully efficient folding. The sequence is that of Protein GrpE from Legionella pneumophila.